The sequence spans 287 residues: Nucleoside kinase (287 aa).

Substrate contacts are provided by Asp-13, Asn-28, Gly-38, and Asn-42. Gln-102 serves as a coordination point for ATP. Residues Ser-104 and Gln-150 each contribute to the substrate site. ATP is bound by residues Asn-173 and 196 to 201 (TNGERG). Asp-227 contributes to the substrate binding site. Residue Asp-227 is the Proton acceptor of the active site.

It belongs to the carbohydrate kinase PfkB family. As to quaternary structure, homodimer. It depends on Mg(2+) as a cofactor. The cofactor is Co(2+).

It catalyses the reaction adenosine + ATP = AMP + ADP + H(+). It carries out the reaction cytidine + ATP = CMP + ADP + H(+). The catalysed reaction is guanosine + ATP = GMP + ADP + H(+). The enzyme catalyses inosine + ATP = IMP + ADP + H(+). In terms of biological role, nucleoside kinase with broad substrate specificity. Catalyzes the phosphorylation of a variety of nucleosides to the corresponding nucleoside 5'-mono-phosphate in the presence of phosphate donors and divalent cations. Displays the most efficient activity with guanosine, followed by inosine, cytidine, and adenosine. Negligible enzymatic activity is detected with thymidine, uridine, and 2-deoxyadenosine. ATP is the most efficient phosphate donor, but can also use GTP and ITP. Shows no sugar kinase activity, since it is unable to phosphorylate ribose, fructose-1-phosphate, or fructose-6-phosphate. The polypeptide is Nucleoside kinase (Thermoplasma acidophilum (strain ATCC 25905 / DSM 1728 / JCM 9062 / NBRC 15155 / AMRC-C165)).